Here is a 442-residue protein sequence, read N- to C-terminus: Protein trichome birefringence-like 26 (442 aa).

Residues 51-71 (FFLYFSLVALAYYFIISSLAV) traverse the membrane as a helical; Signal-anchor for type II membrane protein segment. Positions 164–166 (GDS) match the GDS motif motif. Residues 409–423 (DCLHWCLPGPIDSWN) carry the DCXHWCLPGXXDXWN motif motif.

The protein belongs to the PC-esterase family. TBL subfamily.

It localises to the membrane. Its function is as follows. May be involved in the O-acetylation of mannan. May act as a bridging protein that binds pectin and other cell wall polysaccharides. Probably involved in maintaining esterification of pectins. This Arabidopsis thaliana (Mouse-ear cress) protein is Protein trichome birefringence-like 26 (TBL26).